Reading from the N-terminus, the 108-residue chain is Protein S100-A15A (108 aa).

Residues 53-88 (KEPYYITELFQAADKNKDNQICFDEFLYILGKLVKD) form the EF-hand domain. Aspartate 66, asparagine 68, aspartate 70, glutamine 72, and glutamate 77 together coordinate Ca(2+).

The protein belongs to the S-100 family.

This Pongo abelii (Sumatran orangutan) protein is Protein S100-A15A (S100A15A).